The chain runs to 451 residues: UPF0210 protein Cbei_2352 (451 aa).

Belongs to the UPF0210 family. Homodimer.

This is UPF0210 protein Cbei_2352 from Clostridium beijerinckii (strain ATCC 51743 / NCIMB 8052) (Clostridium acetobutylicum).